A 289-amino-acid chain; its full sequence is Ribosomal RNA small subunit methyltransferase A (289 aa).

Positions 21, 23, 48, 69, 94, and 120 each coordinate S-adenosyl-L-methionine.

This sequence belongs to the class I-like SAM-binding methyltransferase superfamily. rRNA adenine N(6)-methyltransferase family. RsmA subfamily.

Its subcellular location is the cytoplasm. The catalysed reaction is adenosine(1518)/adenosine(1519) in 16S rRNA + 4 S-adenosyl-L-methionine = N(6)-dimethyladenosine(1518)/N(6)-dimethyladenosine(1519) in 16S rRNA + 4 S-adenosyl-L-homocysteine + 4 H(+). Functionally, specifically dimethylates two adjacent adenosines (A1518 and A1519) in the loop of a conserved hairpin near the 3'-end of 16S rRNA in the 30S particle. May play a critical role in biogenesis of 30S subunits. This Haemophilus ducreyi (strain 35000HP / ATCC 700724) protein is Ribosomal RNA small subunit methyltransferase A.